We begin with the raw amino-acid sequence, 593 residues long: Tyrosine-protein phosphatase non-receptor type 11 (593 aa).

2 SH2 domains span residues 6–102 (WFHP…KYPL) and 112–216 (WFHG…KQPL). One can recognise a Tyrosine-protein phosphatase domain in the interval 247–521 (FWEEFETLQQ…RFIYMAVQHY (275 aa)). Residues aspartate 425, 459-465 (CSAGIGR), and glutamine 506 contribute to the substrate site. Cysteine 459 (phosphocysteine intermediate) is an active-site residue. Over residues 548–557 (SLSDQTSGDQ) the composition is skewed to polar residues. Residues 548–575 (SLSDQTSGDQSPLPPCTPTPTCPEMRED) are disordered. Residues 559–568 (PLPPCTPTPT) show a composition bias toward pro residues.

The protein belongs to the protein-tyrosine phosphatase family. Non-receptor class 2 subfamily. Post-translationally, phosphorylated by tyrosine-protein kinases. In terms of tissue distribution, expressed in embryonic fibroblast, hematopoietic, erythroid, myeloid and lymphoid cells.

The protein resides in the cytoplasm. The enzyme catalyses O-phospho-L-tyrosyl-[protein] + H2O = L-tyrosyl-[protein] + phosphate. Its function is as follows. This PTPase activity may directly link growth factor receptors and other signaling proteins through protein-tyrosine phosphorylation. The SH2 regions may interact with other cellular components to modulate its own phosphatase activity against interacting substrates. May play a positive role during the stages of erythroid cell proliferation. The polypeptide is Tyrosine-protein phosphatase non-receptor type 11 (PTPN11) (Gallus gallus (Chicken)).